The primary structure comprises 238 residues: Ribitol-5-phosphate cytidylyltransferase (238 aa).

CTP is bound by residues 7 to 10 and 80 to 86; these read FAGG and GETGQES.

This sequence belongs to the IspD/TarI cytidylyltransferase family. TarI subfamily.

It catalyses the reaction D-ribitol 5-phosphate + CTP + H(+) = CDP-L-ribitol + diphosphate. In terms of biological role, catalyzes the transfer of the cytidylyl group of CTP to D-ribitol 5-phosphate. The chain is Ribitol-5-phosphate cytidylyltransferase from Vibrio parahaemolyticus serotype O3:K6 (strain RIMD 2210633).